Here is a 405-residue protein sequence, read N- to C-terminus: 26S proteasome regulatory subunit 8 homolog (405 aa).

The residue at position 2 (threonine 2) is an N-acetylthreonine. ATP is bound at residue glycine 189–threonine 196.

This sequence belongs to the AAA ATPase family. In terms of assembly, may form a homodimer or a heterodimer with a related family member. Interacts with OLA1, TMA17, and UBR1. In terms of processing, N-acetylated by NAT1.

It localises to the cytoplasm. The protein resides in the nucleus. In terms of biological role, the 26S proteasome is involved in the ATP-dependent degradation of ubiquitinated proteins. The regulatory (or ATPase) complex confers ATP dependency and substrate specificity to the 26S complex. The chain is 26S proteasome regulatory subunit 8 homolog (RPT6) from Saccharomyces cerevisiae (strain ATCC 204508 / S288c) (Baker's yeast).